The chain runs to 297 residues: Acetylglutamate kinase (297 aa).

Residues 68–69 (GG), R90, and N189 each bind substrate.

Belongs to the acetylglutamate kinase family. ArgB subfamily.

It localises to the cytoplasm. It catalyses the reaction N-acetyl-L-glutamate + ATP = N-acetyl-L-glutamyl 5-phosphate + ADP. Its pathway is amino-acid biosynthesis; L-arginine biosynthesis; N(2)-acetyl-L-ornithine from L-glutamate: step 2/4. Catalyzes the ATP-dependent phosphorylation of N-acetyl-L-glutamate. The polypeptide is Acetylglutamate kinase (Akkermansia muciniphila (strain ATCC BAA-835 / DSM 22959 / JCM 33894 / BCRC 81048 / CCUG 64013 / CIP 107961 / Muc)).